Reading from the N-terminus, the 247-residue chain is Geranylgeranylglyceryl phosphate synthase (247 aa).

2 residues coordinate Mg(2+): Asp23 and Ser52. Sn-glycerol 1-phosphate is bound by residues 171 to 177 (YLEAGSG), 203 to 204 (GG), and 225 to 226 (GT).

This sequence belongs to the GGGP/HepGP synthase family. Group II subfamily. It depends on Mg(2+) as a cofactor.

It is found in the cytoplasm. It catalyses the reaction sn-glycerol 1-phosphate + (2E,6E,10E)-geranylgeranyl diphosphate = sn-3-O-(geranylgeranyl)glycerol 1-phosphate + diphosphate. The protein operates within membrane lipid metabolism; glycerophospholipid metabolism. Functionally, prenyltransferase that catalyzes the transfer of the geranylgeranyl moiety of geranylgeranyl diphosphate (GGPP) to the C3 hydroxyl of sn-glycerol-1-phosphate (G1P). This reaction is the first ether-bond-formation step in the biosynthesis of archaeal membrane lipids. This Methanosarcina acetivorans (strain ATCC 35395 / DSM 2834 / JCM 12185 / C2A) protein is Geranylgeranylglyceryl phosphate synthase.